The primary structure comprises 377 residues: Unsaturated 3S-rhamnoglycuronyl hydrolase (377 aa).

Residues 1-25 (MKNQALKILTLCVLVGSAMSLKLYA) form the signal peptide. Asp161 serves as the catalytic Proton donor.

The protein belongs to the glycosyl hydrolase 105 family.

The protein localises to the periplasm. Its function is as follows. Unsaturated beta-glucuronyl hydrolase involved in ulvan degradation. Ulvan is the main polysaccharide component of the Ulvales (green seaweed) cell wall. It is composed of disaccharide building blocks comprising 3-sulfated rhamnose (Rha3S) linked to D-glucuronic acid (GlcA), L-iduronic acid (IduA), or D-xylose (Xyl). Unsaturated 3S-rhamnoglycuronyl hydrolase works together with ulvan lyases to fully degrade the ulvan polymer, catalyzing specifically the cleavage of the unsaturated 4-deoxy-L-threo-hex-4-enopyranosiduronic acid (deltaUA) of deltaUA-Rha3S disaccharides and deltaUA-Rha3S-Xyl-Rha3S tetrasaccharides, the end products of the ulvan lyase reaction. Also hydrolases deltaUA-Rha3S-IduA-Rha3S and deltaUA-Rha3S-GlcA-Rha3S tetrasaccharidestetrasaccharides. Prefers tetrasaccharides over disaccharides and prefers an uronic residue at subsite +2. In Formosa agariphila (strain DSM 15362 / KCTC 12365 / LMG 23005 / KMM 3901 / M-2Alg 35-1), this protein is Unsaturated 3S-rhamnoglycuronyl hydrolase.